Here is a 342-residue protein sequence, read N- to C-terminus: Autoinducer 2 import system permease protein LsrC (342 aa).

Over 1–13 (MLKFIQNNREITA) the chain is Periplasmic. The helical transmembrane segment at 14 to 34 (LLAVLLLFVLPGFLDRQYLSV) threads the bilayer. At 35–38 (QTLT) the chain is on the cytoplasmic side. A helical transmembrane segment spans residues 39–59 (MVYSSAQILILLAMGATLVML). Topologically, residues 60–69 (TRNIDVSVGS) are periplasmic. A helical transmembrane segment spans residues 70–90 (ITGMCAVLLGMLLNAGYSLPV). Over 91 to 92 (AC) the chain is Cytoplasmic. A helical transmembrane segment spans residues 93–113 (VATLLLGLLAGFFNGVLVAWL). Position 114 (Lys114) is a topological domain, periplasmic. A helical transmembrane segment spans residues 115–135 (IPAIVATLGTLGLYRGIMLLW). At 136-154 (TGGKWIEGLPAELKQLSAP) the chain is on the cytoplasmic side. The helical transmembrane segment at 155–175 (LLLGVSAIGWLTIILVAFMAW) threads the bilayer. Over 176 to 212 (LLAKTAFGRSFYATGDNLQGARQLGVRTEAIRIVAFS) the chain is Periplasmic. Residues 213-233 (LNGCMAALAGIVFASQIGFIP) traverse the membrane as a helical segment. Over 234–251 (NQTGTGLEMKAIAACVLG) the chain is Cytoplasmic. The helical transmembrane segment at 252–272 (GISLLGGSGAIIGAVLGAWFL) threads the bilayer. At 273 to 283 (TQIDSVLVLLR) the chain is on the periplasmic side. A helical transmembrane segment spans residues 284–304 (IPAWWNDFIAGLVLLAVLVFD). Topologically, residues 305–342 (GRLRCALELNLRRQKYARFMTPPPSVKPASSGKKREAA) are cytoplasmic.

This sequence belongs to the binding-protein-dependent transport system permease family. AraH/RbsC subfamily. The complex is composed of two ATP-binding proteins (LsrA), two transmembrane proteins (LsrC and LsrD) and a solute-binding protein (LsrB).

The protein resides in the cell inner membrane. Functionally, part of the ABC transporter complex LsrABCD involved in autoinducer 2 (AI-2) import. Probably responsible for the translocation of the substrate across the membrane. The sequence is that of Autoinducer 2 import system permease protein LsrC (lsrC) from Escherichia coli O157:H7.